Consider the following 2111-residue polypeptide: Fatty acid synthase beta subunit aflB (2111 aa).

The tract at residues 200 to 565 (IVTVFNGQGV…KAGTAARVIL (366 aa)) is acetyltransferase (AT) domain. Residues 618 to 863 (SRALGLPPVM…AIVDTPGVPD (246 aa)) form an enoyl reductase (ER) domain region. The tract at residues 1195–1688 (GTKPSWRKAL…SPGETLLVDI (494 aa)) is dehydratase (DH) domain. In terms of domain architecture, MaoC-like spans 1606-1708 (EMPTSSDQYA…IVVATARSES (103 aa)). The segment at 1727-2091 (YLFTGQGSQK…FENVLAISES (365 aa)) is malonyl/palmitoyl transferase (MT/PT) domain.

This sequence belongs to the fungal fatty acid synthetase subunit beta family. [Alpha(6)beta(6)] hexamers of two multifunctional subunits (alpha and beta).

It carries out the reaction acetyl-CoA + n malonyl-CoA + 2n NADPH + 4n H(+) = a long-chain-acyl-CoA + n CoA + n CO2 + 2n NADP(+).. The enzyme catalyses holo-[ACP] + acetyl-CoA = acetyl-[ACP] + CoA. It catalyses the reaction holo-[ACP] + malonyl-CoA = malonyl-[ACP] + CoA. The catalysed reaction is a (3R)-hydroxyacyl-[ACP] = a (2E)-enoyl-[ACP] + H2O. It carries out the reaction a 2,3-saturated acyl-[ACP] + NAD(+) = a (2E)-enoyl-[ACP] + NADH + H(+). The enzyme catalyses (9Z)-octadecenoyl-[ACP] + H2O = (9Z)-octadecenoate + holo-[ACP] + H(+). It participates in secondary metabolite biosynthesis. Functionally, fatty acid synthase beta subunit; part of the gene cluster that mediates the biosynthesis of aspercryptins, linear lipopeptides built from six amino acids including 2 highly unusual and nonproteogenic amino acids, 2-amino-octanoic acid (2aoa) and 2-amino-dodecanol (2adol). The core structure of aspercryptins is as follows: Ser/Ala-Thr-Ile/Val-2aoa-Asn-2adol. The first step of aspercryptin biosynthesis is the generation of the fatty acid precursors, octanoic and dodecanoic acids, by the FAS subunits atnF and atnM. The fatty acid precursors are likely transformed into the corresponding alpha-amino fatty acids in three steps. First, they are hydroxylated by the cytochrome P450 monooxygenase atnE, then oxidized to the corresponding alpha-keto acids by the NAD(P)-dependent oxidoreductase atnD, and finally converted to the alpha-amino fatty acids by the PLP-dependent aminotransferases atnH or atnJ. the alpha-amino fatty acids, 2-amino-octanoic and 2-amino-dodecanoic acids, are recognized, activated, and covalently tethered to the NRPS atnA by its fourth and sixth adenylation domains. The second module of atnA is the Thr module and contains an epimerase (E) domain responsible for the epimerization of Thr to D-allo-Thr. Additionally, despite atnA having only one epimerase domain, the first amino acid of aspercryptin A1 is D-Ser, suggesting that serine is either loaded directly as D-Ser on the first module or that the epimerase domain in the threonine module epimerizes both L-Ser and L-Thr. After condensation of the hexapeptide of aspercryptin, the C-terminal reductase (TE) domain might be involved in the reductive release and production of the aldehyde hexapeptide. Further reduction would generate aspercryptins. The variety of aspercryptins produced reflects the flexibility of the atnA NRPS, allowing incorporation of alanine instead of serine, valine for isoleucine, and a C10 fatty amino alcohol instead of the C12 version. AtnB seems to be involved in the selectivity for Ile versus Val by the third module. Moreover, type B, C and D aspercryptins have an additional N-terminal cichorine, acetyl and propionyl group respectively. This Emericella nidulans (strain FGSC A4 / ATCC 38163 / CBS 112.46 / NRRL 194 / M139) (Aspergillus nidulans) protein is Fatty acid synthase beta subunit aflB.